The sequence spans 527 residues: MLGLNLQQVLSNVPTISSIVSGVGSYQHGSDSSAWASVAASKSCCDALTKSLGKNSVVFPYDAAYSQSMGSYFSLKNSDLHPSCIALPRSAEDVSKAVRTLSLGAHKWEGQCQFGVRGGGHTPFKGAASTDNGIVLDLLHMPSAGISPDYETITVSPSTTWDLVYEVLDAHNRSTLGTKVAGIGVGGASTSCGVSYFSPRYGYICDMVENWEVVLATGDIVNANANENPDLWKALRGGINNFGIVTAVTLKTFGQGPFWGGQTFHSIDTRQEHFKNHEKLASAHPYDPYAHYINTLVWANGGHWFIGNSIQYTKSDPPVAEPEVFKPFLKTERTPIFPGLPEDTLRVDNVTSFSREYAANTLYPQRWQFACISFAPDADFMETFFQMANDAMQQYVKLAGFKLILNYQPAPTVQLERNGAVDSLGPIQTEGNVVFVHWAVSYDESEAQFDDAITKSVQDLFHAANAKAKELGIYRHFIQPTYADSWQSPFDYRSKSTIEELVATSKKYDPLQVFQKQVPGGFKLPQI.

Residues 78–255 (SDLHPSCIAL…TAVTLKTFGQ (178 aa)) enclose the FAD-binding PCMH-type domain.

Belongs to the oxygen-dependent FAD-linked oxidoreductase family.

It participates in mycotoxin biosynthesis. Functionally, FAD-dependent monooxygenase; part of the gene cluster that mediates the biosynthesis of cercosporin, a light-activated, non-host-selective toxin. The perylenequinone chromophore of cercosporin absorbs light energy to attain an electronically-activated triplet state and produces active oxygen species such as the hydroxyl radical, superoxide, hydrogen peroxide or singlet oxygen upon reaction with oxygen molecules. These reactive oxygen species cause damage to various cellular components including lipids, proteins and nucleic acids. The first step of cercosporin biosynthesis is performed by the polyketide synthase CTB1 which catalyzes the formation of nor-toralactone. The starter unit acyltransferase (SAT) domain of CTB1 initiates polyketide extension by the selective utilization of acetyl-CoA, which is elongated to the heptaketide in the beta-ketoacyl synthase (KS) domain by successive condensations with six malonyl units introduced by the malonyl acyltransferase (MAT) domain. The product template (PT) domain catalyzes C4-C9 and C2-C11 aldol cyclizations and dehydrations to a trihydroxynaphthalene, which is thought to be delivered to the thioesterase (TE) domain for product release. The bifunctional enzyme CTB3 then methylates nor-toralactone to toralactone before conducting an unusual oxidative aromatic ring opening. The O-methyltransferase CTB2 further methylates the nascent OH-6 of the CBT3 product, blocking further oxidation at this site before the reductase CTB6 reduces the 2-oxopropyl ketone at position C7, giving naphthalene. The FAD-dependent monooxygenase CTB5 in concert with the multicopper oxidase CTB12 are responsible for homodimerization of naphthalene with CTB7 installing the dioxepine moiety, finally producing cercosporin. The fasciclin domain-containing protein CTB11 might act with CTB5 and CTB12 whereas the roles of CTB9 and CTB10 have still to be elucidated. The protein is FAD-dependent monooxygenase CTB5 of Cercospora beticola (Sugarbeet leaf spot fungus).